The following is an 886-amino-acid chain: Protein translocase subunit SecA (886 aa).

ATP contacts are provided by residues Q81, 99–103 (GEGKT), and D489.

It belongs to the SecA family.

The protein resides in the plastid. Its subcellular location is the chloroplast stroma. It is found in the chloroplast thylakoid membrane. It catalyses the reaction ATP + H2O + cellular proteinSide 1 = ADP + phosphate + cellular proteinSide 2.. Has a central role in coupling the hydrolysis of ATP to the transfer of proteins across the thylakoid membrane. This chain is Protein translocase subunit SecA, found in Phaeodactylum tricornutum (strain CCAP 1055/1).